Reading from the N-terminus, the 141-residue chain is Large ribosomal subunit protein uL11 (141 aa).

The protein belongs to the universal ribosomal protein uL11 family. In terms of assembly, part of the ribosomal stalk of the 50S ribosomal subunit. Interacts with L10 and the large rRNA to form the base of the stalk. L10 forms an elongated spine to which L12 dimers bind in a sequential fashion forming a multimeric L10(L12)X complex. Post-translationally, one or more lysine residues are methylated.

In terms of biological role, forms part of the ribosomal stalk which helps the ribosome interact with GTP-bound translation factors. The protein is Large ribosomal subunit protein uL11 of Petrotoga mobilis (strain DSM 10674 / SJ95).